Here is a 427-residue protein sequence, read N- to C-terminus: Serine--tRNA ligase (427 aa).

235-237 (TSE) provides a ligand contact to L-serine. ATP is bound at residue 266 to 268 (RSE). L-serine is bound at residue Glu-289. 353–356 (EISS) contributes to the ATP binding site. Position 388 (Ser-388) interacts with L-serine.

It belongs to the class-II aminoacyl-tRNA synthetase family. Type-1 seryl-tRNA synthetase subfamily. As to quaternary structure, homodimer. The tRNA molecule binds across the dimer.

The protein localises to the cytoplasm. It carries out the reaction tRNA(Ser) + L-serine + ATP = L-seryl-tRNA(Ser) + AMP + diphosphate + H(+). The catalysed reaction is tRNA(Sec) + L-serine + ATP = L-seryl-tRNA(Sec) + AMP + diphosphate + H(+). It functions in the pathway aminoacyl-tRNA biosynthesis; selenocysteinyl-tRNA(Sec) biosynthesis; L-seryl-tRNA(Sec) from L-serine and tRNA(Sec): step 1/1. Catalyzes the attachment of serine to tRNA(Ser). Is also able to aminoacylate tRNA(Sec) with serine, to form the misacylated tRNA L-seryl-tRNA(Sec), which will be further converted into selenocysteinyl-tRNA(Sec). The sequence is that of Serine--tRNA ligase from Chromobacterium violaceum (strain ATCC 12472 / DSM 30191 / JCM 1249 / CCUG 213 / NBRC 12614 / NCIMB 9131 / NCTC 9757 / MK).